The sequence spans 186 residues: Signal peptidase I (186 aa).

The Cytoplasmic segment spans residues 1–19 (MTEEKSTNKKNSLFEWVKA). A helical transmembrane segment spans residues 20-40 (IIIAVVLALLIRAFLFEPYLV). Over 41–186 (EGTSMDPTLH…FPFNEIRKTD (146 aa)) the chain is Extracellular. Active-site residues include Ser44 and Lys86.

It belongs to the peptidase S26 family.

Its subcellular location is the cell membrane. The catalysed reaction is Cleavage of hydrophobic, N-terminal signal or leader sequences from secreted and periplasmic proteins.. This is Signal peptidase I (lepB) from Bacillus licheniformis.